The chain runs to 144 residues: Maximins 3/H16 (144 aa).

The signal sequence occupies residues 1 to 18 (MNFKYIVAVSFLIASAYA). 2 consecutive propeptides follow at residues 19-43 (RSVQNDEQSLSQRDVLEEESLREIR) and 73-122 (RTAE…KKEK). Isoleucine 143 is subject to Isoleucine amide.

The protein belongs to the bombinin family. As to expression, expressed by the skin glands.

It localises to the secreted. Maximin-3 shows antibacterial activity against both Gram-positive and Gram-negative bacteria. It also shows antimicrobial activity against the fungus C.albicans, but not against A.flavus nor P.uticale. It has little hemolytic activity. It possess a significant cytotoxicity against tumor cell lines. It possess a significant anti-HIV activity. It shows high spermicidal activity. Its function is as follows. Maximin-H16 shows antimicrobial activity against bacteria and against the fungus C.albicans. Shows strong hemolytic activity. This Bombina maxima (Giant fire-bellied toad) protein is Maximins 3/H16.